A 341-amino-acid polypeptide reads, in one-letter code: Short chain dehydrogenase FGM9 (341 aa).

NADP(+)-binding residues include Leu-38, Lys-63, Asp-88, and Asn-114. Catalysis depends on proton donor residues Ser-167 and Tyr-200. Positions 200 and 204 each coordinate NADP(+). Lys-204 functions as the Lowers pKa of active site Tyr in the catalytic mechanism.

Belongs to the short-chain dehydrogenases/reductases (SDR) family.

It functions in the pathway secondary metabolite biosynthesis. Its function is as follows. Short chain dehydrogenase; part of the Fg3_54/C64 gene cluster that mediates the biosynthesis of the octapeptide fusaoctaxin A, a virulence factor that is required for cell-to-cell invasiveness of plant host. The 2 nonribosomal peptide synthetases NRPS9 and NRPS5 form an assembly line which likely utilizes GABA as a starter unit (loaded on the unique module M1 of NRPS9) and sequentially incorporates seven extender units composed of the residues L-Ala, L-allo-Ile, L-Ser, L-Val, L-Ser, L-Leu and L-Leu, respectively. During the process, each of the residues that are tethered on modules M3-M7 of NRPS5 containing an E domain can undergo an epimerization reaction to produce a D-configuration before the transpeptidation reaction occurs. The elongation of the peptidyl chain might be terminated by module M8-mediated L-Leu incorporation, followed by R domain-catalyzed 4 electron reduction to release the resulting octapeptide from the assembly line as an alcohol. Fusaoctaxin A is cleaved by the cluster specific ABC transporter FGM5 to the pentapeptide fusapentaxin A and the tripeptide fusatrixin A. The other enzymes from the cluster, FGM1, FGM2, FGM3 and FGM9 seem not to be involved in the biosynthesis of fusaoctaxin A and their functions have still to be determined. The chain is Short chain dehydrogenase FGM9 from Gibberella zeae (strain ATCC MYA-4620 / CBS 123657 / FGSC 9075 / NRRL 31084 / PH-1) (Wheat head blight fungus).